Here is a 545-residue protein sequence, read N- to C-terminus: Pseudouridylate synthase RPUSD2 (545 aa).

The interval 48–121 (GLRASHQQNG…PPPKKRRTGV (74 aa)) is disordered. Ser-68 bears the Phosphoserine mark. Residue Asp-274 is part of the active site. At Thr-477 the chain carries Phosphothreonine.

It belongs to the pseudouridine synthase RluA family.

The enzyme catalyses a uridine in mRNA = a pseudouridine in mRNA. In terms of biological role, pseudouridine synthase that catalyzes pseudouridylation of mRNAs. This chain is Pseudouridylate synthase RPUSD2, found in Homo sapiens (Human).